Reading from the N-terminus, the 531-residue chain is Peptide chain release factor 3 (531 aa).

A tr-type G domain is found at 13 to 282 (AKRRTFAIIS…TLIKYAPPPK (270 aa)). Residues 22 to 29 (SHPDAGKT), 90 to 94 (DTPGH), and 144 to 147 (NKLD) each bind GTP.

It belongs to the TRAFAC class translation factor GTPase superfamily. Classic translation factor GTPase family. PrfC subfamily.

Its subcellular location is the cytoplasm. Increases the formation of ribosomal termination complexes and stimulates activities of RF-1 and RF-2. It binds guanine nucleotides and has strong preference for UGA stop codons. It may interact directly with the ribosome. The stimulation of RF-1 and RF-2 is significantly reduced by GTP and GDP, but not by GMP. The sequence is that of Peptide chain release factor 3 from Psychrobacter cryohalolentis (strain ATCC BAA-1226 / DSM 17306 / VKM B-2378 / K5).